The following is a 372-amino-acid chain: Aminomethyltransferase (372 aa).

Belongs to the GcvT family. In terms of assembly, the glycine cleavage system is composed of four proteins: P, T, L and H.

The catalysed reaction is N(6)-[(R)-S(8)-aminomethyldihydrolipoyl]-L-lysyl-[protein] + (6S)-5,6,7,8-tetrahydrofolate = N(6)-[(R)-dihydrolipoyl]-L-lysyl-[protein] + (6R)-5,10-methylene-5,6,7,8-tetrahydrofolate + NH4(+). The glycine cleavage system catalyzes the degradation of glycine. The chain is Aminomethyltransferase from Synechocystis sp. (strain ATCC 27184 / PCC 6803 / Kazusa).